The following is a 94-amino-acid chain: Antifungal protein (94 aa).

The signal sequence occupies residues 1 to 21 (MKFVSLASLGFALVAALGAVA). Positions 22–43 (TPVEADSLTAGGLDARDESAVL) are excised as a propeptide. Disulfide bonds link C50–C76, C57–C83, C69–C71, and C92–C94.

The protein belongs to the antifungal protein pafB family.

The protein localises to the secreted. It is found in the host cytoplasm. In terms of biological role, antifungal protein that acts as an inhibitor of growth of a variety of fungal species. In Aspergillus giganteus, this protein is Antifungal protein (afp).